Consider the following 216-residue polypeptide: Endoplasmic reticulum vesicle protein 25 (216 aa).

The first 25 residues, 1 to 25 (MGSSRLAMRSALGLFFLLFVQISLA), serve as a signal peptide directing secretion. At 26–185 (LKFDIAAGKG…TNESTNERVK (160 aa)) the chain is on the lumenal side. One can recognise a GOLD domain in the interval 36 to 126 (ERCIRNFVLK…HRSIELDVDI (91 aa)). A helical membrane pass occupies residues 186-206 (WFAFGTMGMLVGLGVWQVIYL). Topologically, residues 207 to 216 (RAYFRSKHLI) are cytoplasmic.

It belongs to the EMP24/GP25L family.

It is found in the endoplasmic reticulum membrane. The protein localises to the golgi apparatus membrane. Constituent of COPII-coated endoplasmic reticulum-derived transport vesicles. Required for efficient transport of a subset of secretory proteins to the Golgi. Facilitates retrograde transport from the Golgi to the endoplasmic reticulum. This chain is Endoplasmic reticulum vesicle protein 25 (erv25), found in Emericella nidulans (strain FGSC A4 / ATCC 38163 / CBS 112.46 / NRRL 194 / M139) (Aspergillus nidulans).